A 211-amino-acid chain; its full sequence is Small ribosomal subunit protein uS3 (211 aa).

Positions 38-106 constitute a KH type-2 domain; it reads LRNFLKKRLY…EVYLNIQEVR (69 aa).

Belongs to the universal ribosomal protein uS3 family. Part of the 30S ribosomal subunit. Forms a tight complex with proteins S10 and S14.

In terms of biological role, binds the lower part of the 30S subunit head. Binds mRNA in the 70S ribosome, positioning it for translation. This is Small ribosomal subunit protein uS3 from Citrifermentans bemidjiense (strain ATCC BAA-1014 / DSM 16622 / JCM 12645 / Bem) (Geobacter bemidjiensis).